The sequence spans 901 residues: MLIKLLTKVFGSRNDRTLRRMRKAVSLINAMEPEMEKLSDDELKAKTNEFRARIGKGESVESLIPEAFAVVREASKRVFGMRHFDVQLLGGMVLNDRCIAEMRTGEGKTLTATLPAYLNALSGKGVHVVTVNDYLAQRDAENNRPLFEFLGMSVGINLPGMPAPAKREAYAADITYGTNNEYGFDYLRDNMAFSPEERVQRKLHYALVDEVDSILIDEARTPLIISGPAEDSSEMYKKVNKIIPHLIRQEKEDSDTFQGEGHFSVDEKARQVNLTERGLVLIEELLVQEGIMDEGESLYSPGNIMLMHHVTAALRAHALFTRDVDYIVKDGEVIIVDEHTGRTMQGRRWSDGLHQAVEAKEGVEIQNENQTLASITFQNYFRLYEKLAGMTGTADTEAFEFSSIYKLDTVVVPTNRPMIRKDLPDLVYITEAEKIQAIIEDIKERTANGQPVLVGTISIEKSEVVSRELTKAGIKHNVLNAKFHANEAGIVAQAGYPAAVTIATNMAGRGTDIMLGGSWQAEVAALEAPTEEQIAQIKADWQVRHDAVLAAGGLHIIGTERHESRRIDNQLRGRSGRQGDPGSSRFYLSMEDALMRIFASDRVSGMMRKLGMKPGEAIEHPWVTKAIANAQRKVESRNFDIRKQLLEYDDVANDQRRAIYTQRNELLDVSDVSDTINSIREDVFKATIDAYIPPQSLEEMWDIPGLQERLKNDFDLEMPIAEWLDKEPELHEETLRERILAQSIEVYQRKEEVVGAEMMRHFEKGVMLQTLDSLWKEHLAAMDYLRQGIHLRGYAQKDPKQEYKRESFAMFAAMLESLKYEVISTLSKVQVRMPEEVEAMEMQRREEAERLAQMQQLSHQDDDAAVAADLAAQTGERKIGRNDPCPCGSGKKYKQCHGRLS.

ATP is bound by residues Gln87, Gly105 to Thr109, and Asp512. Cys885, Cys887, Cys896, and His897 together coordinate Zn(2+).

This sequence belongs to the SecA family. As to quaternary structure, monomer and homodimer. Part of the essential Sec protein translocation apparatus which comprises SecA, SecYEG and auxiliary proteins SecDF-YajC and YidC. The cofactor is Zn(2+).

The protein resides in the cell inner membrane. It localises to the cytoplasm. The enzyme catalyses ATP + H2O + cellular proteinSide 1 = ADP + phosphate + cellular proteinSide 2.. Functionally, part of the Sec protein translocase complex. Interacts with the SecYEG preprotein conducting channel. Has a central role in coupling the hydrolysis of ATP to the transfer of proteins into and across the cell membrane, serving both as a receptor for the preprotein-SecB complex and as an ATP-driven molecular motor driving the stepwise translocation of polypeptide chains across the membrane. In Salmonella typhi, this protein is Protein translocase subunit SecA.